A 557-amino-acid polypeptide reads, in one-letter code: BZIP-type transcription factor MBZ1 (557 aa).

A compositionally biased stretch (low complexity) spans 171 to 194 (AKAQAQQRQQQQQQQLIQQTQRQT). Disordered stretches follow at residues 171–209 (AKAQ…TDPI) and 221–273 (MRAK…RQLR). Positions 229–240 (EPESQSVLNNLP) are enriched in polar residues. Residues 254 to 271 (RLLASEEGKKLSSKERRQ) show a composition bias toward basic and acidic residues. In terms of domain architecture, bZIP spans 264-327 (LSSKERRQLR…KRLSDLTRML (64 aa)). Residues 267–286 (KERRQLRNKVSARAFRSRRK) are basic motif. The interval 289-296 (ISQLEAEI) is leucine-zipper. The interval 344–364 (PTGLPQGSPVKIEQNPQQEQN) is disordered.

The protein resides in the nucleus. In terms of biological role, BZIP-type transcription factor that functions as either an activator or a suppressor, and which contributes to the regulation of fungal growth, conidiation, cell wall integrity, and virulence. Plays a key role in virulence against insects by mediating cell wall integrity, cell surface hydrophobicity, and adherence to hydrophobic surfaces. Exhibits negative regulation of subtilisin proteases, but positive control of an adhesin gene. The chain is BZIP-type transcription factor MBZ1 from Metarhizium robertsii (strain ARSEF 23 / ATCC MYA-3075) (Metarhizium anisopliae (strain ARSEF 23)).